The primary structure comprises 529 residues: Peptide chain release factor 3 (529 aa).

The tr-type G domain maps to 11–280 (AKRRTFAIIS…GLVEWAPAPM (270 aa)). GTP contacts are provided by residues 20–27 (SHPDAGKT), 88–92 (DTPGH), and 142–145 (NKLD).

It belongs to the TRAFAC class translation factor GTPase superfamily. Classic translation factor GTPase family. PrfC subfamily.

It localises to the cytoplasm. Increases the formation of ribosomal termination complexes and stimulates activities of RF-1 and RF-2. It binds guanine nucleotides and has strong preference for UGA stop codons. It may interact directly with the ribosome. The stimulation of RF-1 and RF-2 is significantly reduced by GTP and GDP, but not by GMP. This is Peptide chain release factor 3 from Shigella boydii serotype 18 (strain CDC 3083-94 / BS512).